The chain runs to 176 residues: Adenylyl-sulfate kinase (176 aa).

ATP is bound at residue 12 to 19; that stretch reads GLSGAGKS. The active-site Phosphoserine intermediate is Ser-86.

This sequence belongs to the APS kinase family.

The enzyme catalyses adenosine 5'-phosphosulfate + ATP = 3'-phosphoadenylyl sulfate + ADP + H(+). It functions in the pathway sulfur metabolism; hydrogen sulfide biosynthesis; sulfite from sulfate: step 2/3. Its function is as follows. Catalyzes the synthesis of activated sulfate. This Gloeothece citriformis (strain PCC 7424) (Cyanothece sp. (strain PCC 7424)) protein is Adenylyl-sulfate kinase.